Here is a 254-residue protein sequence, read N- to C-terminus: Large ribosomal subunit protein uL2B (254 aa).

Lysine 46 participates in a covalent cross-link: Glycyl lysine isopeptide (Lys-Gly) (interchain with G-Cter in ubiquitin). At serine 52 the chain carries Phosphoserine. Residue lysine 93 forms a Glycyl lysine isopeptide (Lys-Gly) (interchain with G-Cter in ubiquitin) linkage. At serine 95 the chain carries Phosphoserine. Glycyl lysine isopeptide (Lys-Gly) (interchain with G-Cter in ubiquitin) cross-links involve residues lysine 119 and lysine 145. 3 positions are modified to phosphoserine: serine 159, serine 160, and serine 249.

The protein belongs to the universal ribosomal protein uL2 family. As to quaternary structure, component of the large ribosomal subunit (LSU). Mature yeast ribosomes consist of a small (40S) and a large (60S) subunit. The 40S small subunit contains 1 molecule of ribosomal RNA (18S rRNA) and 33 different proteins (encoded by 57 genes). The large 60S subunit contains 3 rRNA molecules (25S, 5.8S and 5S rRNA) and 46 different proteins (encoded by 81 genes).

The protein localises to the cytoplasm. Component of the ribosome, a large ribonucleoprotein complex responsible for the synthesis of proteins in the cell. The small ribosomal subunit (SSU) binds messenger RNAs (mRNAs) and translates the encoded message by selecting cognate aminoacyl-transfer RNA (tRNA) molecules. The large subunit (LSU) contains the ribosomal catalytic site termed the peptidyl transferase center (PTC), which catalyzes the formation of peptide bonds, thereby polymerizing the amino acids delivered by tRNAs into a polypeptide chain. The nascent polypeptides leave the ribosome through a tunnel in the LSU and interact with protein factors that function in enzymatic processing, targeting, and the membrane insertion of nascent chains at the exit of the ribosomal tunnel. The chain is Large ribosomal subunit protein uL2B from Saccharomyces cerevisiae (strain ATCC 204508 / S288c) (Baker's yeast).